The sequence spans 358 residues: Mesaconyl-CoA hydratase (358 aa).

The region spanning 44–148 (AHDPGLRLTH…TSSSRPQYGI (105 aa)) is the MaoC-like domain.

The protein belongs to the enoyl-CoA hydratase/isomerase family.

It carries out the reaction (2R,3S)-beta-methylmalyl-CoA = 2-methylfumaryl-CoA + H2O. In terms of biological role, involved in the methylaspartate cycle. Catalyzes the reversible hydration of mesaconyl-CoA (2-methylfumaryl-CoA) to yield beta-methylmalyl-CoA ((2R,3S)-beta-methylmalyl-CoA). The polypeptide is Mesaconyl-CoA hydratase (Haloarcula marismortui (strain ATCC 43049 / DSM 3752 / JCM 8966 / VKM B-1809) (Halobacterium marismortui)).